A 179-amino-acid chain; its full sequence is Large ribosomal subunit protein uL6 (179 aa).

It belongs to the universal ribosomal protein uL6 family. As to quaternary structure, part of the 50S ribosomal subunit.

In terms of biological role, this protein binds to the 23S rRNA, and is important in its secondary structure. It is located near the subunit interface in the base of the L7/L12 stalk, and near the tRNA binding site of the peptidyltransferase center. This Leptospira biflexa serovar Patoc (strain Patoc 1 / ATCC 23582 / Paris) protein is Large ribosomal subunit protein uL6.